We begin with the raw amino-acid sequence, 326 residues long: ATP-dependent 6-phosphofructokinase (326 aa).

G12 is an ATP binding site. 22–26 (RAIIK) is a binding site for ADP. Residues 73–74 (RF) and 103–106 (GDGS) contribute to the ATP site. D104 provides a ligand contact to Mg(2+). Residue 126–128 (TID) coordinates substrate. D128 acts as the Proton acceptor in catalysis. R155 contacts ADP. Substrate contacts are provided by residues R163 and 170–172 (MGH). Residues 186-188 (GSE), K212, and 215-217 (KRS) each bind ADP. Substrate contacts are provided by residues E224, K246, and 252 to 255 (HIQR).

The protein belongs to the phosphofructokinase type A (PFKA) family. ATP-dependent PFK group I subfamily. Prokaryotic clade 'B1' sub-subfamily. In terms of assembly, homotetramer. Requires Mg(2+) as cofactor.

It is found in the cytoplasm. It catalyses the reaction beta-D-fructose 6-phosphate + ATP = beta-D-fructose 1,6-bisphosphate + ADP + H(+). It participates in carbohydrate degradation; glycolysis; D-glyceraldehyde 3-phosphate and glycerone phosphate from D-glucose: step 3/4. Allosterically activated by ADP and other diphosphonucleosides, and allosterically inhibited by phosphoenolpyruvate. Its function is as follows. Catalyzes the phosphorylation of D-fructose 6-phosphate to fructose 1,6-bisphosphate by ATP, the first committing step of glycolysis. The polypeptide is ATP-dependent 6-phosphofructokinase (Mycoplasmopsis pulmonis (strain UAB CTIP) (Mycoplasma pulmonis)).